Reading from the N-terminus, the 227-residue chain is Probable N-acetyltransferase family 8 member 5 (227 aa).

Transmembrane regions (helical) follow at residues 29–49 (IPAAFRYTLLLPQTLLFLFVM), 53–73 (IVLVFGSWLLAVICIFFLLLL), and 201–221 (ISIIKWLITFSIIHFTYSFPS). In terms of domain architecture, N-acetyltransferase spans 69–213 (FLLLLLRLLA…IKWLITFSII (145 aa)).

This sequence belongs to the camello family.

Its subcellular location is the membrane. In terms of biological role, may play a role in regulation of gastrulation. The protein is Probable N-acetyltransferase family 8 member 5 of Mus musculus (Mouse).